The following is a 950-amino-acid chain: MVAAPSARRLVRRSHSALLAALTVLLLQTLVGWNFSSLHSGAGERRGGAAAGCTEQPAPPPAPAPRRERRDLPPGPAAPLGACCGGGGRGPPARARARALAGCPEEPRPQQPAGQGALPTRALDGYFSHRPKEKVRTDSNNENSVPKDFENVDNSNFAPRTQKQKHQPELAKKPPSRQKELLKRRLEQEEKGKGQSFPGKGTHEALPPGGRAAVNGSHGKDAPRQPHTRKSGGGSPELRYDQPPKCDISGKEAISALSRAKSKHCRQEIGDTYCRHKLGMLMPKKVTRFCSLEGKANKNVQWDEDSVEYMLANPVRIAFVLVVHGRASRQLQRMFKAIYHKDHFYYIHVDKRSNYLHRQVLQFARQYGNVRVTPWRMATIWGGASLLSTYLQSMRDLLEMTDWPWDFFINLSAADYPIRTNDQLVAFLSRYRDMNFLKSHGRDNARFIRKQGLDRLFLECDAHMWRLGDRRIPEGIAVDGGSDWFLLNRKFVEYVTFSTDDLVTKMKQFYSYTLLPAESFFHTVLENSPHCDTMVDNNLRITNWNRKLGCKCQYKHIVDWCGCSPNDFKPQDFHRFQQTARPTFFARKFEAVVNQEIIGQLDYYLYGNYPAGTPGLRSYWENVYDEPDGIHSLSDVALTLYHSFARLGLRRAESSLHVETGNSCRYYPMGHPASVHLYFLADRFQGFLIKHHATNLAVSKLETLETWVMPKKVFKIASPPSDFGRLQFSEVRVGTDWDAKERLFRNFGGLLGPMDEPVGMQKWGKGPNVTVTVIWVDPVNIIAATYDILIESTAEFTHYKPPLNLPLRPGVWTVKILHHWVPVAETKFLVAPLTFSNRQPIKPEEVLKLHNGPLRSAYMEQSFQSLNPVLSLPISPAQVEQARRNAGSTGATLEHWLDSLVGGTWTAMDICATGPTACPVMQTCTHTAWSSFSPDPKSELGAVKPDGRLR.

Over 1–17 the chain is Cytoplasmic; that stretch reads MVAAPSARRLVRRSHSA. Residues 18 to 38 form a helical; Signal-anchor for type II membrane protein membrane-spanning segment; that stretch reads LLAALTVLLLQTLVGWNFSSL. Residues 39–950 are Lumenal-facing; that stretch reads HSGAGERRGG…GAVKPDGRLR (912 aa). The disordered stretch occupies residues 42–246; the sequence is AGERRGGAAA…ELRYDQPPKC (205 aa). Residues 91-104 are compositionally biased toward low complexity; that stretch reads PPARARARALAGCP. Residues 134–150 are compositionally biased toward basic and acidic residues; it reads KVRTDSNNENSVPKDFE. The segment covering 152–161 has biased composition (polar residues); the sequence is VDNSNFAPRT. Over residues 166 to 193 the composition is skewed to basic and acidic residues; it reads HQPELAKKPPSRQKELLKRRLEQEEKGK. The N-linked (GlcNAc...) asparagine glycan is linked to Asn215. 4 disulfide bridges follow: Cys246/Cys274, Cys290/Cys531, Cys550/Cys563, and Cys552/Cys561. UDP-alpha-D-xylose is bound by residues Val322, Asp350, and 379-381; that span reads TIW. A glycan (N-linked (GlcNAc...) asparagine) is linked at Asn410. 483 to 484 contacts UDP-alpha-D-xylose; it reads DW. Residues Ser564 and 587–588 each bind UDP-alpha-D-xylose; that span reads RK. Intrachain disulfides connect Cys664–Cys918 and Cys911–Cys924. Asn768 carries an N-linked (GlcNAc...) asparagine glycan. Positions 931–950 are disordered; it reads SFSPDPKSELGAVKPDGRLR.

The protein belongs to the glycosyltransferase 14 family. XylT subfamily. As to quaternary structure, monomer. A divalent metal cation serves as cofactor. In terms of processing, contains 7 disulfide bonds. N-glycosylated.

Its subcellular location is the golgi apparatus membrane. It catalyses the reaction UDP-alpha-D-xylose + L-seryl-[protein] = 3-O-(beta-D-xylosyl)-L-seryl-[protein] + UDP + H(+). It participates in glycan metabolism; chondroitin sulfate biosynthesis. The protein operates within glycan metabolism; heparan sulfate biosynthesis. Functionally, catalyzes the first step in the biosynthesis of chondroitin sulfate and dermatan sulfate proteoglycans, such as DCN. Transfers D-xylose from UDP-D-xylose to specific serine residues of the core protein. Required for normal maturation of chondrocytes during bone development, normal onset of ossification and normal embryonic and postnatal skeleton development, especially of the long bones. The sequence is that of Xylosyltransferase 1 (XYLT1) from Canis lupus familiaris (Dog).